A 420-amino-acid chain; its full sequence is MKLFVHLVLFISLFIPYFTKAALYVDIKKSSVGNIGLVVSKCTCKTALESELSENIAKVIGTNLSNCGLFNVKRSAEAESKSWKSDTVVTVSLSEISGSALELSFRLFDAFTKRELLTQSVVFPAKDWRKIGHLVSDVIHDRLIGEKGHFNTKITYIAEEKDSNYKSVRKIAVMNQDGSNIKYLTNGDRFVSTPRFSPNGKGIVYISYANGKSYIILKNLKDNTESIISAFEGVVSAPRFSPDGKSLLISHSLGGETNILSLDLSSKRTKKITKGSAISTSPSFSPDQKYMAFSSDISGSQQLYVIDFTNKSKKPKRISFGSGRYATPVWSPKGDLIAFTKIQSGKFYIGVMKPDGKEERLLSEGHKIESPAWLPNGREIIFTRTESPSNSKLYLVDLVKKNQKMVSTPTNASLPDWSYF.

Residues 1 to 21 form the signal peptide; sequence MKLFVHLVLFISLFIPYFTKA.

Belongs to the TolB family. As to quaternary structure, the Tol-Pal system is composed of five core proteins: the inner membrane proteins TolA, TolQ and TolR, the periplasmic protein TolB and the outer membrane protein Pal. They form a network linking the inner and outer membranes and the peptidoglycan layer.

It is found in the periplasm. In terms of biological role, part of the Tol-Pal system, which plays a role in outer membrane invagination during cell division and is important for maintaining outer membrane integrity. In Wolbachia pipientis wMel, this protein is Tol-Pal system protein TolB.